A 279-amino-acid chain; its full sequence is Thymidylate synthase (279 aa).

133-134 (RR) serves as a coordination point for dUMP. The Nucleophile role is filled by Cys154. Residues 178–181 (RSND), Asn189, and 219–221 (HIY) contribute to the dUMP site. Asp181 contributes to the (6R)-5,10-methylene-5,6,7,8-tetrahydrofolate binding site. Residue Ala278 coordinates (6R)-5,10-methylene-5,6,7,8-tetrahydrofolate.

The protein belongs to the thymidylate synthase family. Bacterial-type ThyA subfamily. As to quaternary structure, homodimer.

It is found in the cytoplasm. It carries out the reaction dUMP + (6R)-5,10-methylene-5,6,7,8-tetrahydrofolate = 7,8-dihydrofolate + dTMP. It participates in pyrimidine metabolism; dTTP biosynthesis. Functionally, catalyzes the reductive methylation of 2'-deoxyuridine-5'-monophosphate (dUMP) to 2'-deoxythymidine-5'-monophosphate (dTMP) while utilizing 5,10-methylenetetrahydrofolate (mTHF) as the methyl donor and reductant in the reaction, yielding dihydrofolate (DHF) as a by-product. This enzymatic reaction provides an intracellular de novo source of dTMP, an essential precursor for DNA biosynthesis. This is Thymidylate synthase from Streptococcus pyogenes serotype M12 (strain MGAS2096).